Reading from the N-terminus, the 545-residue chain is CTP synthase (545 aa).

The interval methionine 1–leucine 266 is amidoligase domain. Position 14 (serine 14) interacts with CTP. Position 14 (serine 14) interacts with UTP. ATP is bound by residues serine 15–isoleucine 20 and aspartate 72. Mg(2+)-binding residues include aspartate 72 and glutamate 140. Residues aspartate 147 to glutamate 149, lysine 187 to glutamine 192, and lysine 223 contribute to the CTP site. UTP is bound by residues lysine 187 to glutamine 192 and lysine 223. Lysine 239 to valine 241 is an ATP binding site. Residues threonine 291 to arginine 542 enclose the Glutamine amidotransferase type-1 domain. Glycine 352 contributes to the L-glutamine binding site. Cysteine 379 (nucleophile; for glutamine hydrolysis) is an active-site residue. Residues leucine 380–glutamine 383, glutamate 403, and arginine 470 each bind L-glutamine. Active-site residues include histidine 515 and glutamate 517.

It belongs to the CTP synthase family. In terms of assembly, homotetramer.

The catalysed reaction is UTP + L-glutamine + ATP + H2O = CTP + L-glutamate + ADP + phosphate + 2 H(+). It carries out the reaction L-glutamine + H2O = L-glutamate + NH4(+). The enzyme catalyses UTP + NH4(+) + ATP = CTP + ADP + phosphate + 2 H(+). It functions in the pathway pyrimidine metabolism; CTP biosynthesis via de novo pathway; CTP from UDP: step 2/2. Its activity is regulated as follows. Allosterically activated by GTP, when glutamine is the substrate; GTP has no effect on the reaction when ammonia is the substrate. The allosteric effector GTP functions by stabilizing the protein conformation that binds the tetrahedral intermediate(s) formed during glutamine hydrolysis. Inhibited by the product CTP, via allosteric rather than competitive inhibition. Catalyzes the ATP-dependent amination of UTP to CTP with either L-glutamine or ammonia as the source of nitrogen. Regulates intracellular CTP levels through interactions with the four ribonucleotide triphosphates. The sequence is that of CTP synthase from Cronobacter sakazakii (strain ATCC BAA-894) (Enterobacter sakazakii).